Here is a 495-residue protein sequence, read N- to C-terminus: Averantin hydroxylase (495 aa).

A helical transmembrane segment spans residues 12 to 32; sequence ILLLIVLTVLTPPSLALYRLW. N-linked (GlcNAc...) asparagine glycans are attached at residues N258 and N289. C436 lines the heme pocket.

This sequence belongs to the cytochrome P450 family. Requires heme as cofactor.

It is found in the membrane. The catalysed reaction is (1'S)-averantin + reduced [NADPH--hemoprotein reductase] + O2 = (1'S,5'R)-5'-hydroxyaverantin + oxidized [NADPH--hemoprotein reductase] + H2O. It catalyses the reaction (1'S)-averantin + reduced [NADPH--hemoprotein reductase] + O2 = (1'S,5'S)-5'-hydroxyaverantin + oxidized [NADPH--hemoprotein reductase] + H2O + H(+). Its pathway is mycotoxin biosynthesis; aflatoxin biosynthesis. Functionally, averantin hydroxylase; part of the gene cluster that mediates the biosynthesis of aflatoxins, a group of polyketide-derived furanocoumarins, and part of the most toxic and carcinogenic compounds among the known mycotoxins. The four major aflatoxins produced by A.parasiticus are aflatoxin B1 (AFB1), aflatoxin B2 (AFB2), aflatoxin G1 (AFG1) and aflatoxin G2 (AFG2). Within the aflatoxin pathway, the cytochrome P450 monooxygenase aflG catalyzes the hydroxylation of AVN to 5'hydroxyaverantin (HAVN). The biosynthesis of aflatoxins begins with the norsolorinic acid synthase aflC that combines a hexanoyl starter unit produced by the fatty acid synthase aflA/aflB and 7 malonyl-CoA extender units to synthesize the precursor NOR. The second step is the conversion of NOR to averantin and requires the norsolorinic acid ketoreductase aflD, which catalyzes the dehydration of norsolorinic acid to form (1'S)-averantin. The norsolorinic acid reductases aflE and aflF may also play a role in the conversion of NOR to AVN. The cytochrome P450 monooxygenase aflG then catalyzes the hydroxylation of AVN to 5'hydroxyaverantin (HAVN). The next step is performed by the 5'-hydroxyaverantin dehydrogenase aflH that transforms HAVN to 5'-oxoaverantin (OAVN) which is further converted to averufin (AVF) by aflK that plays a dual role in the pathway, as a 5'-oxoaverantin cyclase that mediates conversion of 5'-oxoaverantin, as well as a versicolorin B synthase in a later step in the pathway. The averufin oxidase aflI catalyzes the conversion of AVF to versiconal hemiacetal acetate (VHA). VHA is then the substrate for the versiconal hemiacetal acetate esterase aflJ to yield versiconal (VAL). Versicolorin B synthase aflK then converts VAL to versicolorin B (VERB) by closing the bisfuran ring of aflatoxin which is required for DNA-binding, thus giving to aflatoxin its activity as a mutagen. Then, the activity of the versicolorin B desaturase aflL leads to versicolorin A (VERA). A branch point starts from VERB since it can also be converted to dihydrodemethylsterigmatocystin (DMDHST), probably also by aflL, VERA being a precursor for aflatoxins B1 and G1, and DMDHST for aflatoxins B2 and G2. Next, the versicolorin reductase aflM and the cytochrome P450 monooxygenase aflN are involved in conversion of VERA to demethylsterigmatocystin (DMST). AflX and aflY seem also involved in this step, through probable aflX-mediated epoxide ring-opening step following versicolorin A oxidation and aflY-mediated Baeyer-Villiger oxidation required for the formation of the xanthone ring. The methyltransferase aflO then leads to the modification of DMST to sterigmatocystin (ST), and of DMDHST to dihydrosterigmatocystin (DHST). Both ST and DHST are then substrates of the O-methyltransferase aflP to yield O-methylsterigmatocystin (OMST) and dihydro-O-methylsterigmatocystin (DHOMST), respectively. Finally OMST is converted to aflatoxins B1 and G1, and DHOMST to aflatoxins B2 and G2, via the action of several enzymes including O-methylsterigmatocystin oxidoreductase aflQ, the cytochrome P450 monooxygenase aflU, but also the NADH-dependent flavin oxidoreductase nadA which is specifically required for the synthesis of AFG1. This chain is Averantin hydroxylase, found in Aspergillus parasiticus (strain ATCC 56775 / NRRL 5862 / SRRC 143 / SU-1).